The sequence spans 204 residues: Large ribosomal subunit protein bL9 (204 aa).

The segment at 180–204 (DDIGGAASDDEGDAPAAAADEEESK) is disordered. Acidic residues predominate over residues 187-204 (SDDEGDAPAAAADEEESK).

It belongs to the bacterial ribosomal protein bL9 family.

Functionally, binds to the 23S rRNA. In Ruegeria sp. (strain TM1040) (Silicibacter sp.), this protein is Large ribosomal subunit protein bL9.